Reading from the N-terminus, the 420-residue chain is Trophoblast glycoprotein (420 aa).

Residues 1-31 (MPGGCSRGPAAGDGRLRLARLALVLLGWVSS) form the signal peptide. Residues 32-355 (SSPTSSASSF…PILPPSLQTS (324 aa)) lie on the Extracellular side of the membrane. Positions 53–91 (SAQPPLPDQCPALCECSEAARTVKCVNRNLTEVPTDLPA) constitute an LRRNT domain. 2 cysteine pairs are disulfide-bonded: cysteine 62–cysteine 68 and cysteine 66–cysteine 77. The N-linked (GlcNAc...) asparagine glycan is linked to asparagine 81. LRR repeat units follow at residues 92 to 113 (YVRNLFLTGNQLAVLPAGAFAR), 116 to 139 (PLAELAALNLSGSRLDEVRAGAFE), 141 to 163 (LPSLRQLDLSHNPLADLSPFAFS), 172 to 204 (PSPLVELILNHIVPPEDERQNRSFEGMVVAALL), 209 to 232 (LQGLRRLELASNHFLYLPRDVLAQ), 233 to 255 (LPSLRHLDLSNNSLVSLTYVSFR), and 256 to 275 (NLTHLESLHLEDNALKVLHN). N-linked (GlcNAc...) asparagine glycosylation occurs at asparagine 124. An N-linked (GlcNAc...) asparagine glycan is attached at asparagine 275. The LRRCT domain occupies 283–346 (GLPHIRVFLD…LNSADLDCDP (64 aa)). 2 disulfides stabilise this stretch: cysteine 298/cysteine 323 and cysteine 300/cysteine 344. A helical membrane pass occupies residues 356 to 376 (YVFLGIVLALIGAIFLLVLYL). At 377-420 (NRKGIKKWMHNIRDACRDHMEGYHYRYEINADPRLTNLSSNSDV) the chain is on the cytoplasmic side. Serine 418 carries the phosphoserine modification.

In terms of processing, highly glycosylated. As to expression, expressed by all types of trophoblasts as early as 9 weeks of development. Specific for trophoblastic cells except for amniotic epithelium. In adult tissues, the expression is limited to a few epithelial cell types but is found on a variety of carcinoma.

The protein localises to the cell membrane. In terms of biological role, may function as an inhibitor of Wnt/beta-catenin signaling by indirectly interacting with LRP6 and blocking Wnt3a-dependent LRP6 internalization. This Homo sapiens (Human) protein is Trophoblast glycoprotein (TPBG).